Reading from the N-terminus, the 202-residue chain is Small ribosomal subunit protein uS4c (202 aa).

Residues 13–37 (RRPGVSPGLTSKTLKSKSNYIDRST) are disordered. The span at 20–37 (GLTSKTLKSKSNYIDRST) shows a compositional bias: polar residues. One can recognise an S4 RNA-binding domain in the interval 90 to 153 (MRLDNTIFRL…ESRSMISKNI (64 aa)).

This sequence belongs to the universal ribosomal protein uS4 family. In terms of assembly, part of the 30S ribosomal subunit. Contacts protein S5. The interaction surface between S4 and S5 is involved in control of translational fidelity.

The protein localises to the plastid. The protein resides in the chloroplast. Functionally, one of the primary rRNA binding proteins, it binds directly to 16S rRNA where it nucleates assembly of the body of the 30S subunit. Its function is as follows. With S5 and S12 plays an important role in translational accuracy. This is Small ribosomal subunit protein uS4c (rps4) from Takakia lepidozioides (Moss).